Reading from the N-terminus, the 534-residue chain is MTKYIFVTGGVASSVGKGITVASLGRLLKSRGISVSIQKLDPYINVDPGTMSPYQHGEVFVTEDGAETDLDLGHYERFIDENLSRVNNITTGQIYSSVIQKERRGDFLGGTIQVIPHITNEIKSRVALVAKNTNADVVIVEIGGTVGDIESLPFLEAIRQMKKDVGRDNVMYIHVTLLPYLQASGELKTKPTQHSIAELRRVGISPAVVLCRSDLPVDDDMREKIALFADLPNEAVVALPTVDSIYEVPLVLEEAGLGDLIIERLALAAQPVQLDEWRSLVARIKQPKRHTTVAIVGKYVELRDAYMSVAESVRHAGWAQDIQVDIKWVSSEELEVADPVTMLGDVQGIIVPGGFGYRGVEGKIRAVRYARENKIPFLGLCLGMQCATIEFARFALNAPDANSTEFNPNTKLPVIDFMPDQLDISDKGGTMRLGVYPCILAPDTKAAKAYGRELALERHRHRFEFNNKYRKAMEAAGFVISGHSPDGRLVEIVELRDHPWFVASQFHPEFKSRPNNPHPLFRDFVQAALEQIAE.

The tract at residues 1–267 is amidoligase domain; the sequence is MTKYIFVTGG…GDLIIERLAL (267 aa). Ser13 serves as a coordination point for CTP. Ser13 is a binding site for UTP. An ATP-binding site is contributed by 14 to 19; sequence SVGKGI. Tyr54 provides a ligand contact to L-glutamine. Position 71 (Asp71) interacts with ATP. The Mg(2+) site is built by Asp71 and Glu141. CTP is bound by residues 148–150, 188–193, and Lys224; these read DIE and KTKPTQ. Residues 188-193 and Lys224 each bind UTP; that span reads KTKPTQ. The 243-residue stretch at 292–534 folds into the Glutamine amidotransferase type-1 domain; sequence TVAIVGKYVE…VQAALEQIAE (243 aa). Gly354 contributes to the L-glutamine binding site. Cys381 acts as the Nucleophile; for glutamine hydrolysis in catalysis. Residues 382–385, Glu405, and Arg462 each bind L-glutamine; that span reads LGMQ. Active-site residues include His507 and Glu509.

This sequence belongs to the CTP synthase family. As to quaternary structure, homotetramer.

The enzyme catalyses UTP + L-glutamine + ATP + H2O = CTP + L-glutamate + ADP + phosphate + 2 H(+). It catalyses the reaction L-glutamine + H2O = L-glutamate + NH4(+). The catalysed reaction is UTP + NH4(+) + ATP = CTP + ADP + phosphate + 2 H(+). It functions in the pathway pyrimidine metabolism; CTP biosynthesis via de novo pathway; CTP from UDP: step 2/2. Its activity is regulated as follows. Allosterically activated by GTP, when glutamine is the substrate; GTP has no effect on the reaction when ammonia is the substrate. The allosteric effector GTP functions by stabilizing the protein conformation that binds the tetrahedral intermediate(s) formed during glutamine hydrolysis. Inhibited by the product CTP, via allosteric rather than competitive inhibition. Catalyzes the ATP-dependent amination of UTP to CTP with either L-glutamine or ammonia as the source of nitrogen. Regulates intracellular CTP levels through interactions with the four ribonucleotide triphosphates. The protein is CTP synthase of Herpetosiphon aurantiacus (strain ATCC 23779 / DSM 785 / 114-95).